Here is a 608-residue protein sequence, read N- to C-terminus: Endo-1,4-beta-xylanase C (608 aa).

An N-terminal signal peptide occupies residues 1–25 (MKTFSVTKSSVVFAMALGMASTAFA). The region spanning 40 to 250 (TITSNQTGKI…VNGEVRGGHM (211 aa)) is the GH11 1 domain. Catalysis depends on Glu-142, which acts as the Nucleophile. The active-site Proton donor is the Glu-237. Residues 263 to 294 (SDPVSSSSVKSSSSTDAPKSSSSKGNGNVSGK) show a composition bias toward low complexity. The tract at residues 263–296 (SDPVSSSSVKSSSSTDAPKSSSSKGNGNVSGKID) is disordered. A GH11 2 domain is found at 316-514 (NSSVTGNVGS…GSGSFDVTYF (199 aa)). The active-site Nucleophile is the Glu-409. Residue Glu-501 is the Proton donor of the active site. The disordered stretch occupies residues 520-539 (AHPLAQPEPESSSSEAKVES). Over residues 527 to 539 (EPESSSSEAKVES) the composition is skewed to low complexity.

It belongs to the glycosyl hydrolase 11 (cellulase G) family.

The catalysed reaction is Endohydrolysis of (1-&gt;4)-beta-D-xylosidic linkages in xylans.. Its pathway is glycan degradation; xylan degradation. In terms of biological role, cleaves xylans with the production of xylose, xylobiose and xylo-oligosaccharides. In Fibrobacter succinogenes (strain ATCC 19169 / S85), this protein is Endo-1,4-beta-xylanase C (xynC).